Here is a 430-residue protein sequence, read N- to C-terminus: RPM1 interacting protein 13 (430 aa).

Residues 1–21 (MGSGNHVDIVDVSSGEEDVDT) are disordered. The tract at residues 231–300 (RHRIRQPIPH…QVSQSSHHSS (70 aa)) is nuclear localization.

As to quaternary structure, interacts with RPM1 (via its NB-ARC domain). Binds to ARF1 in the nucleus.

The protein resides in the nucleus. Its function is as follows. Resistance protein interactor which positively enhances RPM1-mediated resistance to necrotrophic bacterial pathogens Pseudomonas syringae pv. tomato DC3000 harboring type III effector protein AvrRpm1 or AvrB, but prevents the hypersensitive response (HR) controlled by RPM1. Together with ARF1, promotes leaf senescence and cell death, probably by facilitating the translocation of ARF1 into the nucleus, and activates ROS-related enzymes (e.g. POD, CAT and SOD). The chain is RPM1 interacting protein 13 from Arabidopsis thaliana (Mouse-ear cress).